Reading from the N-terminus, the 82-residue chain is Putative antimicrobial peptide 7848 (82 aa).

Positions 1-17 are cleaved as a signal peptide; the sequence is MNENLWAAPAPKKLSKH. Residues 16-60 form a disordered region; it reads KHFFGRGGPLGKETGPNLFPKKPGAGKGLGFPPTKKPRGQPRVLK. A propeptide spanning residues 38 to 82 is cleaved from the precursor; the sequence is PGAGKGLGFPPTKKPRGQPRVLKKPKWNSEGLIGILHRGSDGVQF. Positions 50 to 60 are enriched in basic residues; it reads KKPRGQPRVLK.

It belongs to the non-disulfide-bridged peptide (NDBP) superfamily. Short antimicrobial peptide (group 4) family. As to expression, expressed by the venom gland.

The protein localises to the secreted. The protein is Putative antimicrobial peptide 7848 of Urodacus yaschenkoi (Inland robust scorpion).